Reading from the N-terminus, the 214-residue chain is Holliday junction branch migration complex subunit RuvA (214 aa).

Residues 1-63 (MISSLRGTVL…EDSLTLFGFP (63 aa)) are domain I. The segment at 64–139 (GPDELRAFEL…KLFVTQPRTR (76 aa)) is domain II. Residues 139–143 (RSASS) are flexible linker. The segment at 144–214 (AASTVTADVV…APAAAQAADR (71 aa)) is domain III.

This sequence belongs to the RuvA family. Homotetramer. Forms an RuvA(8)-RuvB(12)-Holliday junction (HJ) complex. HJ DNA is sandwiched between 2 RuvA tetramers; dsDNA enters through RuvA and exits via RuvB. An RuvB hexamer assembles on each DNA strand where it exits the tetramer. Each RuvB hexamer is contacted by two RuvA subunits (via domain III) on 2 adjacent RuvB subunits; this complex drives branch migration. In the full resolvosome a probable DNA-RuvA(4)-RuvB(12)-RuvC(2) complex forms which resolves the HJ.

Its subcellular location is the cytoplasm. Its function is as follows. The RuvA-RuvB-RuvC complex processes Holliday junction (HJ) DNA during genetic recombination and DNA repair, while the RuvA-RuvB complex plays an important role in the rescue of blocked DNA replication forks via replication fork reversal (RFR). RuvA specifically binds to HJ cruciform DNA, conferring on it an open structure. The RuvB hexamer acts as an ATP-dependent pump, pulling dsDNA into and through the RuvAB complex. HJ branch migration allows RuvC to scan DNA until it finds its consensus sequence, where it cleaves and resolves the cruciform DNA. This chain is Holliday junction branch migration complex subunit RuvA, found in Clavibacter sepedonicus (Clavibacter michiganensis subsp. sepedonicus).